Reading from the N-terminus, the 548-residue chain is Probable 5-epi-aristolochene synthase 4 (548 aa).

5 residues coordinate Mg(2+): Asp-301, Asp-305, Asp-444, Thr-448, and Glu-452. A DDXXD motif motif is present at residues Asp-301–Asp-305.

This sequence belongs to the terpene synthase family. In terms of assembly, monomer. Mg(2+) serves as cofactor.

It localises to the cytoplasm. It catalyses the reaction (2E,6E)-farnesyl diphosphate = (+)-5-epi-aristolochene + diphosphate. Its pathway is secondary metabolite biosynthesis; terpenoid biosynthesis. Functionally, catalyzes the cyclization of trans,trans-farnesyl diphosphate (FPP) to the bicyclic intermediate 5-epi-aristolochene, initial step in the conversion of FPP to the sesquiterpenoid antifungal phytoalexin capsidiol. Produces germacrene A as an enzyme-bound intermediate that is not released by the enzyme, but is further cyclized to produce the bicyclic 5-epi-aristolochene. This chain is Probable 5-epi-aristolochene synthase 4, found in Nicotiana attenuata (Coyote tobacco).